Reading from the N-terminus, the 277-residue chain is RsbT co-antagonist protein RsbRB (277 aa).

Residues 165-276 (SSPVITLSKS…TNLAQALNYH (112 aa)) form the STAS domain. T186 is subject to Phosphothreonine.

Interacts with RsbRA and RsbS in the stressosome. The stressosome probably also contains RsbRC and RsbRD. Post-translationally, phosphorylated by RsbT.

One of 4 functionally non-identical RsbR paralogs, it functions in the environmental signaling branch of the general stress response. In terms of biological role, negative regulator of sigma-B activity. Non-phosphorylated RsbS binds to RsbT, preventing its association with RsbU. Requires any one of RsbRA, RsbRB, RsbRC or RsbRD to sequester RsbT. When RsbS and the RsbR paralog(s) are phosphorylated, they release RsbT, which can then bind and activate RsbU. This Bacillus subtilis (strain 168) protein is RsbT co-antagonist protein RsbRB (rsbRB).